The sequence spans 466 residues: Asparagine--tRNA ligase (466 aa).

Belongs to the class-II aminoacyl-tRNA synthetase family. As to quaternary structure, homodimer.

The protein resides in the cytoplasm. The catalysed reaction is tRNA(Asn) + L-asparagine + ATP = L-asparaginyl-tRNA(Asn) + AMP + diphosphate + H(+). This Escherichia coli O139:H28 (strain E24377A / ETEC) protein is Asparagine--tRNA ligase.